Reading from the N-terminus, the 1077-residue chain is Error-prone DNA polymerase (1077 aa).

The protein belongs to the DNA polymerase type-C family. DnaE2 subfamily.

It localises to the cytoplasm. It catalyses the reaction DNA(n) + a 2'-deoxyribonucleoside 5'-triphosphate = DNA(n+1) + diphosphate. Functionally, DNA polymerase involved in damage-induced mutagenesis and translesion synthesis (TLS). It is not the major replicative DNA polymerase. The chain is Error-prone DNA polymerase from Brucella abortus biovar 1 (strain 9-941).